A 414-amino-acid chain; its full sequence is 4-hydroxy-3-methylbut-2-en-1-yl diphosphate synthase (flavodoxin) (414 aa).

Residues cysteine 304, cysteine 307, cysteine 350, and glutamate 357 each contribute to the [4Fe-4S] cluster site.

The protein belongs to the IspG family. [4Fe-4S] cluster is required as a cofactor.

The catalysed reaction is (2E)-4-hydroxy-3-methylbut-2-enyl diphosphate + oxidized [flavodoxin] + H2O + 2 H(+) = 2-C-methyl-D-erythritol 2,4-cyclic diphosphate + reduced [flavodoxin]. It functions in the pathway isoprenoid biosynthesis; isopentenyl diphosphate biosynthesis via DXP pathway; isopentenyl diphosphate from 1-deoxy-D-xylulose 5-phosphate: step 5/6. Its function is as follows. Converts 2C-methyl-D-erythritol 2,4-cyclodiphosphate (ME-2,4cPP) into 1-hydroxy-2-methyl-2-(E)-butenyl 4-diphosphate. The chain is 4-hydroxy-3-methylbut-2-en-1-yl diphosphate synthase (flavodoxin) from Aromatoleum aromaticum (strain DSM 19018 / LMG 30748 / EbN1) (Azoarcus sp. (strain EbN1)).